We begin with the raw amino-acid sequence, 167 residues long: uncharacterized protein (167 aa).

Positions 48, 127, and 131 each coordinate a divalent metal cation.

This sequence belongs to the DinB family.

This is an uncharacterized protein from Bacillus subtilis (strain 168).